Consider the following 655-residue polypeptide: Macrolide export ATP-binding/permease protein MacB (655 aa).

The ABC transporter domain occupies 6–244 (IELRDVWREF…DALAGDEGPE (239 aa)). 42–49 (GASGSGKS) provides a ligand contact to ATP. The interval 225 to 252 (DQARPDAPPLDALAGDEGPEAPRPAPQP) is disordered. A run of 4 helical transmembrane segments spans residues 280-300 (LTML…ALGA), 527-547 (LTLL…IGVM), 583-603 (VLVC…IGVL), and 620-640 (SMVL…FLPA).

This sequence belongs to the ABC transporter superfamily. Macrolide exporter (TC 3.A.1.122) family. Homodimer.

The protein localises to the cell inner membrane. In terms of biological role, non-canonical ABC transporter that contains transmembrane domains (TMD), which form a pore in the inner membrane, and an ATP-binding domain (NBD), which is responsible for energy generation. Confers resistance against macrolides. The polypeptide is Macrolide export ATP-binding/permease protein MacB (Bordetella avium (strain 197N)).